The sequence spans 562 residues: DNA ligase (562 aa).

E250 contributes to the ATP binding site. The N6-AMP-lysine intermediate role is filled by K252. Positions 257, 272, 302, 342, 417, and 423 each coordinate ATP.

The protein belongs to the ATP-dependent DNA ligase family. Mg(2+) serves as cofactor. It depends on Zn(2+) as a cofactor.

The enzyme catalyses ATP + (deoxyribonucleotide)n-3'-hydroxyl + 5'-phospho-(deoxyribonucleotide)m = (deoxyribonucleotide)n+m + AMP + diphosphate.. The catalysed reaction is NAD(+) + (deoxyribonucleotide)n-3'-hydroxyl + 5'-phospho-(deoxyribonucleotide)m = (deoxyribonucleotide)n+m + AMP + beta-nicotinamide D-nucleotide.. DNA ligase that seals nicks in double-stranded DNA during DNA replication, DNA recombination and DNA repair. Can use both ATP and NAD(+), but NAD(+) may be a preferred nucleotide cofactor. In Thermococcus onnurineus (strain NA1), this protein is DNA ligase.